Consider the following 267-residue polypeptide: Acyl-[acyl-carrier-protein]--UDP-N-acetylglucosamine O-acyltransferase (267 aa).

It belongs to the transferase hexapeptide repeat family. LpxA subfamily. Homotrimer.

The protein localises to the cytoplasm. It carries out the reaction a (3R)-hydroxyacyl-[ACP] + UDP-N-acetyl-alpha-D-glucosamine = a UDP-3-O-[(3R)-3-hydroxyacyl]-N-acetyl-alpha-D-glucosamine + holo-[ACP]. Its pathway is glycolipid biosynthesis; lipid IV(A) biosynthesis; lipid IV(A) from (3R)-3-hydroxytetradecanoyl-[acyl-carrier-protein] and UDP-N-acetyl-alpha-D-glucosamine: step 1/6. Its function is as follows. Involved in the biosynthesis of lipid A, a phosphorylated glycolipid that anchors the lipopolysaccharide to the outer membrane of the cell. This Hamiltonella defensa subsp. Acyrthosiphon pisum (strain 5AT) protein is Acyl-[acyl-carrier-protein]--UDP-N-acetylglucosamine O-acyltransferase.